We begin with the raw amino-acid sequence, 251 residues long: Triosephosphate isomerase (251 aa).

9–11 (NWK) contributes to the substrate binding site. Histidine 94 acts as the Electrophile in catalysis. Glutamate 163 serves as the catalytic Proton acceptor. Substrate-binding positions include glycine 169, serine 209, and 230-231 (GG).

The protein belongs to the triosephosphate isomerase family. In terms of assembly, homodimer.

Its subcellular location is the cytoplasm. The catalysed reaction is D-glyceraldehyde 3-phosphate = dihydroxyacetone phosphate. It participates in carbohydrate biosynthesis; gluconeogenesis. It functions in the pathway carbohydrate degradation; glycolysis; D-glyceraldehyde 3-phosphate from glycerone phosphate: step 1/1. In terms of biological role, involved in the gluconeogenesis. Catalyzes stereospecifically the conversion of dihydroxyacetone phosphate (DHAP) to D-glyceraldehyde-3-phosphate (G3P). The chain is Triosephosphate isomerase from Dehalococcoides mccartyi (strain ATCC BAA-2266 / KCTC 15142 / 195) (Dehalococcoides ethenogenes (strain 195)).